The following is a 137-amino-acid chain: uncharacterized protein (137 aa).

Residues 1–10 show a composition bias toward low complexity; that stretch reads MISVDVPGHP. The interval 1–23 is disordered; it reads MISVDVPGHPGDAGGGGGGARKV. Residues 11-20 are compositionally biased toward gly residues; sequence GDAGGGGGGA.

This is an uncharacterized protein from Human adenovirus C serotype 2 (HAdV-2).